The chain runs to 233 residues: Adenylyl cyclase-associated protein 1 (233 aa).

Tyr-14 carries the phosphotyrosine modification. Residue Ser-17 is modified to Phosphoserine. Disordered regions lie at residues 43–71 (VDKX…PSAL) and 91–129 (DEKT…KPVT). Residues 53 to 64 (LSGLPSGPSAGS) are compositionally biased toward low complexity. N6-methyllysine is present on Lys-101. Ser-104, Ser-115, Ser-122, and Ser-124 each carry phosphoserine. Lys-151 participates in a covalent cross-link: Glycyl lysine isopeptide (Lys-Gly) (interchain with G-Cter in SUMO1). Positions 173 to 221 (VPXISINKXDGRHIYLSKNSLDCEIVSAKSSEMNVLIPTEGGDFNEFPV) constitute a C-CAP/cofactor C-like domain.

The protein belongs to the CAP family. As to quaternary structure, homodimer. Binds actin monomers.

Its subcellular location is the cell membrane. In terms of biological role, directly regulates filament dynamics and has been implicated in a number of complex developmental and morphological processes, including mRNA localization and the establishment of cell polarity. This chain is Adenylyl cyclase-associated protein 1 (CAP1), found in Sus scrofa (Pig).